Consider the following 263-residue polypeptide: Proteasome subunit alpha (263 aa).

Positions 229-263 (AALLQDTPPDDADADADAGKKPANDGNLPPNDDKS) are disordered.

The protein belongs to the peptidase T1A family. In terms of assembly, the 20S proteasome core is composed of 14 alpha and 14 beta subunits that assemble into four stacked heptameric rings, resulting in a barrel-shaped structure. The two inner rings, each composed of seven catalytic beta subunits, are sandwiched by two outer rings, each composed of seven alpha subunits. The catalytic chamber with the active sites is on the inside of the barrel. Has a gated structure, the ends of the cylinder being occluded by the N-termini of the alpha-subunits. Is capped by the proteasome-associated ATPase, ARC.

It localises to the cytoplasm. Its pathway is protein degradation; proteasomal Pup-dependent pathway. Its activity is regulated as follows. The formation of the proteasomal ATPase ARC-20S proteasome complex, likely via the docking of the C-termini of ARC into the intersubunit pockets in the alpha-rings, may trigger opening of the gate for substrate entry. Interconversion between the open-gate and close-gate conformations leads to a dynamic regulation of the 20S proteasome proteolysis activity. Component of the proteasome core, a large protease complex with broad specificity involved in protein degradation. The chain is Proteasome subunit alpha from Actinosynnema mirum (strain ATCC 29888 / DSM 43827 / JCM 3225 / NBRC 14064 / NCIMB 13271 / NRRL B-12336 / IMRU 3971 / 101).